Here is a 362-residue protein sequence, read N- to C-terminus: Golgi-resident adenosine 3',5'-bisphosphate 3'-phosphatase (362 aa).

The residue at position 1 (Met-1) is an N-acetylmethionine. Over 1–12 the chain is Cytoplasmic; it reads MAPMGIRLSPLG. The helical transmembrane segment at 13-33 threads the bilayer; that stretch reads VAVFCLLGLGVLYHLYSGFLA. Residues 34–362 lie on the Lumenal side of the membrane; the sequence is GRFSLFGLGG…LPDLEKTGHK (329 aa). Positions 88-109 are disordered; it reads RESNVLHEKSKGKTREGADDKM. The active-site Proton acceptor is Asp-113. Glu-136, Asp-177, Leu-179, and Asp-180 together coordinate Mg(2+). Residue Thr-182 is the Proton acceptor of the active site. AMP is bound by residues Ser-245 and His-248. Asn-262 carries an N-linked (GlcNAc...) asparagine glycan. AMP contacts are provided by Gly-271 and Lys-275. Mg(2+) is bound at residue Asp-303.

The protein belongs to the inositol monophosphatase superfamily. The cofactor is Mg(2+). Post-translationally, contains N-linked glycan resistant to endoglycosydase H.

It is found in the golgi apparatus. The protein localises to the trans-Golgi network membrane. It carries out the reaction adenosine 3',5'-bisphosphate + H2O = AMP + phosphate. It functions in the pathway sulfur metabolism. With respect to regulation, strongly inhibited by lithium. Functionally, exhibits 3'-nucleotidase activity toward adenosine 3',5'-bisphosphate (PAP), namely hydrolyzes adenosine 3',5'-bisphosphate into adenosine 5'-monophosphate (AMP) and a phosphate. May play a role in the formation of skeletal elements derived through endochondral ossification, possibly by clearing adenosine 3',5'-bisphosphate produced by Golgi sulfotransferases during glycosaminoglycan sulfation. Has no activity toward 3'-phosphoadenosine 5'-phosphosulfate (PAPS) or inositol phosphate (IP) substrates including I(1)P, I(1,4)P2, I(1,3,4)P3, I(1,4,5)P3 and I(1,3,4,5)P4. This chain is Golgi-resident adenosine 3',5'-bisphosphate 3'-phosphatase (BPNT2), found in Bos taurus (Bovine).